A 148-amino-acid polypeptide reads, in one-letter code: Large ribosomal subunit protein uL15 (148 aa).

Residues 1-10 (MQLHNLEYKK) show a composition bias toward basic and acidic residues. The segment at 1 to 42 (MQLHNLEYKKGSRNHKEKRVGRGHGSGLGKTSGRGQDGQKAR) is disordered. Basic residues predominate over residues 11 to 22 (GSRNHKEKRVGR). Residues 23-36 (GHGSGLGKTSGRGQ) show a composition bias toward gly residues.

The protein belongs to the universal ribosomal protein uL15 family. In terms of assembly, part of the 50S ribosomal subunit.

Functionally, binds to the 23S rRNA. This chain is Large ribosomal subunit protein uL15, found in Ureaplasma urealyticum serovar 10 (strain ATCC 33699 / Western).